The primary structure comprises 262 residues: Tritrans,polycis-undecaprenyl-diphosphate synthase (geranylgeranyl-diphosphate specific) (262 aa).

Asp-40 is a catalytic residue. Asp-40 serves as a coordination point for Mg(2+). Residues 41–44 (GNRR), Trp-45, and 85–87 (STE) each bind substrate. Asn-88 functions as the Proton acceptor in the catalytic mechanism. Residues Arg-92, Arg-211, and 217-219 (RIS) contribute to the substrate site. Glu-230 is a Mg(2+) binding site.

Belongs to the UPP synthase family. As to quaternary structure, homodimer. Requires Mg(2+) as cofactor.

It catalyses the reaction geranylgeranyl diphosphate + 7 isopentenyl diphosphate = tri-trans,hepta-cis-undecaprenyl diphosphate + 7 diphosphate. Catalyzes the sequential condensation of isopentenyl diphosphate (IPP) with geranylgeranyl diphosphate (GGPP) to yield (2Z,6Z,10Z,14Z,18Z,22Z,26Z,30E,34E,38E)-undecaprenyl diphosphate (tritrans,heptacis-UPP). It is probably the precursor of glycosyl carrier lipids. The protein is Tritrans,polycis-undecaprenyl-diphosphate synthase (geranylgeranyl-diphosphate specific) of Sulfurisphaera tokodaii (strain DSM 16993 / JCM 10545 / NBRC 100140 / 7) (Sulfolobus tokodaii).